The sequence spans 204 residues: Holliday junction branch migration complex subunit RuvA (204 aa).

Residues 1–64 are domain I; it reads MIGKLKGTID…EDQLKLFGFM (64 aa). The interval 65–143 is domain II; that stretch reads TALEREWFNL…AFAGEAINIG (79 aa). Residues 144-151 form a flexible linker region; the sequence is LKQELGEG. A domain III region spans residues 152–204; it reads VAAAPVADAVSALTNLGYSRDQAANAIAAAMKTAGEGADSAKLIRLGLKELAR.

Belongs to the RuvA family. In terms of assembly, homotetramer. Forms an RuvA(8)-RuvB(12)-Holliday junction (HJ) complex. HJ DNA is sandwiched between 2 RuvA tetramers; dsDNA enters through RuvA and exits via RuvB. An RuvB hexamer assembles on each DNA strand where it exits the tetramer. Each RuvB hexamer is contacted by two RuvA subunits (via domain III) on 2 adjacent RuvB subunits; this complex drives branch migration. In the full resolvosome a probable DNA-RuvA(4)-RuvB(12)-RuvC(2) complex forms which resolves the HJ.

It localises to the cytoplasm. Functionally, the RuvA-RuvB-RuvC complex processes Holliday junction (HJ) DNA during genetic recombination and DNA repair, while the RuvA-RuvB complex plays an important role in the rescue of blocked DNA replication forks via replication fork reversal (RFR). RuvA specifically binds to HJ cruciform DNA, conferring on it an open structure. The RuvB hexamer acts as an ATP-dependent pump, pulling dsDNA into and through the RuvAB complex. HJ branch migration allows RuvC to scan DNA until it finds its consensus sequence, where it cleaves and resolves the cruciform DNA. The protein is Holliday junction branch migration complex subunit RuvA of Rhizobium johnstonii (strain DSM 114642 / LMG 32736 / 3841) (Rhizobium leguminosarum bv. viciae).